Reading from the N-terminus, the 796-residue chain is Pathogenesis-related homeodomain protein (796 aa).

Disordered regions lie at residues 34–57 (KKGK…EELC) and 80–99 (VKKT…KVEV). A compositionally biased stretch (basic residues) spans 81-90 (KKTRKRKSKR). The segment at 190–247 (HIFCAECNSREAFPDNDIILCDGTCNRAFHQKCLDPPLETESIPPGDQGWFCKFCDCK) adopts a PHD-type zinc-finger fold. 3 disordered regions span residues 282–347 (SEAT…STGS), 393–422 (LQEQ…STLV), and 511–736 (NRKT…TEEE). Positions 292–303 (WPSDDSKDDDYD) are enriched in acidic residues. The segment at residues 452 to 511 (GGRRRMFRLPRNAVEKLRQVFAETELPSKAVRDRLAKELSLDPEKVNKWFKNTRYMALRN) is a DNA-binding region (homeobox). Polar residues-rich tracts occupy residues 538–547 (ENNTETNEVQ) and 560–569 (ATNQNILSPC). Residues 570 to 580 (NNNQEEFQQEN) are compositionally biased toward low complexity. Positions 581-600 (VSFPSPTDESQQYLEQNDSS) are enriched in polar residues. 4 tandem repeats follow at residues 605–631 (PHEK…MMKE), 632–658 (PHEE…MIEE), 659–685 (PHEE…MMEE), and 686–712 (PHDE…MTEE). The segment at 605–735 (PHEKQSSEIS…KETGRKMTEE (131 aa)) is 5 X 27 AA tandem repeats. Composition is skewed to basic and acidic residues over residues 624–636 (TESK…HEEL), 645–690 (AAEE…HDEL), and 700–733 (VEEK…RKMT). Residues 713 to 735 (SHEELSNEMSLEEKETGRKMTEE) form a 5; truncated repeat. Positions 738 to 759 (LEAVMEMLCRTENKLLDVTQRL) are leucine-zipper.

Belongs to the PHD-associated homeobox family.

It localises to the nucleus. In terms of biological role, specifically binds to the fungal elicitor-responsive DNA element, 5'-CTAATTGTTTA-3', of the gene PR2 promoter. The polypeptide is Pathogenesis-related homeodomain protein (PRH) (Arabidopsis thaliana (Mouse-ear cress)).